Consider the following 872-residue polypeptide: MKQEPTTYQPEEIEKKIYEICSHRGYFEINGNEKIQEKGKRFCLMMPPPNVTGILHIGHALTLSLQDILVRYKRMDGYKTLYQPGLDHAGIATQNVVEKQLLSQGVKKEDLGREKFIQKVWEWKEKSGGAILEQMKRLGVSTAFSRTRFTMDKGLQRAVKLAFLKWYEKGLIVQDNYMVNWCTKDGALSDIEVEYEERKGALYYIRYYLENQKDYLVVATTRPETLFGDSAIMVNPNDERYKHLVGQQVILPLINRTIPIIADAHVEMGFGTGCVKVTPGHDFNDYEVGKRHHLETIKIFDEKGILNAHCGEFENLERLEARDKVVAALKENALLEKIEEHVHQVGHCYRCHNVVEPYVSKQWFVKPEIAQSSIEKIQQGLARFYPSNWINNYNAWMRELRPWCISRQLFWGHQIPVFTCENNHQFVSLDTPLSCPTCKSEKLEQDKDVLDTWFSSGLWAFSTLGWGQEKSDLFNESDLKDFYPNTTLITGFDILFFWVARMLFCSESLLGELPFKDIYLHALVRDEKGEKMSKSKGNVIDPLEMIEKYGADSLRFTLANLCATGRDIKLSTTHLENNKNFANKLFNAASYLKLKQESFKDKERLNEYQTALGRYAKSRLNLVTKEVRNALDNYRFNDATTLLYRFLWGEFCDWFIEFSKVENEAIDELGSVLKEALKLLHPFMPFISESLYHKLSNTELENAHSIMVMPYPKEIAQDEKLEHEFEVIKDCIVSLRRLKIMLETPPIVLKEASVGLREKIENTERLQNYAQKLAKLEKVSVITYKPLKSVSDVGEFCQTYADLENLDLSPLIARLKKQLEKLEKEKLKLNLHNENFVKNAPKSVLEKARESLKTLLEKEGKIQQELDLLEQP.

A 'HIGH' region motif is present at residues 49 to 59; the sequence is PNVTGILHIGH. The 'KMSKS' region motif lies at 531–535; the sequence is KMSKS. An ATP-binding site is contributed by Lys-534. The stretch at 810–871 forms a coiled coil; the sequence is PLIARLKKQL…IQQELDLLEQ (62 aa).

It belongs to the class-I aminoacyl-tRNA synthetase family. ValS type 1 subfamily. Monomer.

It is found in the cytoplasm. It catalyses the reaction tRNA(Val) + L-valine + ATP = L-valyl-tRNA(Val) + AMP + diphosphate. Functionally, catalyzes the attachment of valine to tRNA(Val). As ValRS can inadvertently accommodate and process structurally similar amino acids such as threonine, to avoid such errors, it has a 'posttransfer' editing activity that hydrolyzes mischarged Thr-tRNA(Val) in a tRNA-dependent manner. This is Valine--tRNA ligase from Helicobacter pylori (strain J99 / ATCC 700824) (Campylobacter pylori J99).